A 491-amino-acid polypeptide reads, in one-letter code: Lysine--tRNA ligase (491 aa).

Positions 400 and 407 each coordinate Mg(2+).

The protein belongs to the class-II aminoacyl-tRNA synthetase family. As to quaternary structure, homodimer. It depends on Mg(2+) as a cofactor.

Its subcellular location is the cytoplasm. It carries out the reaction tRNA(Lys) + L-lysine + ATP = L-lysyl-tRNA(Lys) + AMP + diphosphate. The protein is Lysine--tRNA ligase of Mesomycoplasma hyopneumoniae (strain 7448) (Mycoplasma hyopneumoniae).